A 388-amino-acid polypeptide reads, in one-letter code: MPSEETVEKTLKRLQTFSGSHSVVVGLSGGVDSSLTAALLCKAGWDVEGLTLWLMKGKGSCCSDGLVDAAGICDQLGIKHHIVDSKEIFQKEIINNVLKGYEEGITPLPCSRCNKSVKFSEMLKWVKENKNIEKIATGHYARIRYSNESFNENDLPSDGIKRHKLLRGKDLNKDQSYFLYDLPQEILGKTIFPLGELTKEITRIEALKHSLKTAKKPESQDLCLAEHYGSMNAFIDKYLPQKKGEVVLKNGQIIGSHNGIQHFTIGQRKGLGIAWEVPLHVVEIDASLNRVIVAPREDSGKSECIVKDINWVSIEAPQEPIEVEVQIRYRSKAMKAKLIPIFDSNKENYCYKCNIHFEKDQFSITPGQAAVFYKGDYVLGGGLISKEY.

ATP-binding positions include G26–S33 and L52. Catalysis depends on C113, which acts as the Nucleophile. C113 and C223 are disulfide-bonded. G138 is a binding site for ATP. Residues K173–Q175 are interaction with tRNA. C223 (cysteine persulfide intermediate) is an active-site residue. Residues R328–Y329 form an interaction with tRNA region.

This sequence belongs to the MnmA/TRMU family.

It is found in the cytoplasm. The catalysed reaction is S-sulfanyl-L-cysteinyl-[protein] + uridine(34) in tRNA + AH2 + ATP = 2-thiouridine(34) in tRNA + L-cysteinyl-[protein] + A + AMP + diphosphate + H(+). Catalyzes the 2-thiolation of uridine at the wobble position (U34) of tRNA, leading to the formation of s(2)U34. The polypeptide is tRNA-specific 2-thiouridylase MnmA (Prochlorococcus marinus (strain NATL2A)).